Consider the following 740-residue polypeptide: Probable RNA-dependent RNA polymerase 1 (740 aa).

It belongs to the RdRP family.

The catalysed reaction is RNA(n) + a ribonucleoside 5'-triphosphate = RNA(n+1) + diphosphate. Probably involved in the RNA silencing pathway and required for the generation of small interfering RNAs (siRNAs). This chain is Probable RNA-dependent RNA polymerase 1 (RDR1), found in Oryza sativa subsp. japonica (Rice).